Here is a 181-residue protein sequence, read N- to C-terminus: Large ribosomal subunit protein uL5 (181 aa).

It belongs to the universal ribosomal protein uL5 family. In terms of assembly, part of the 50S ribosomal subunit; part of the 5S rRNA/L5/L18/L25 subcomplex. Contacts the 5S rRNA and the P site tRNA. Forms a bridge to the 30S subunit in the 70S ribosome.

This is one of the proteins that bind and probably mediate the attachment of the 5S RNA into the large ribosomal subunit, where it forms part of the central protuberance. In the 70S ribosome it contacts protein S13 of the 30S subunit (bridge B1b), connecting the 2 subunits; this bridge is implicated in subunit movement. Contacts the P site tRNA; the 5S rRNA and some of its associated proteins might help stabilize positioning of ribosome-bound tRNAs. This is Large ribosomal subunit protein uL5 from Helicobacter pylori (strain J99 / ATCC 700824) (Campylobacter pylori J99).